Consider the following 272-residue polypeptide: Phosphatidylglycerol--prolipoprotein diacylglyceryl transferase (272 aa).

The next 4 membrane-spanning stretches (helical) occupy residues 16-36, 62-82, 97-117, and 129-149; these read VGLH…LSSF, FALG…VLFY, IWKG…WAAV, and LSVT…ALLI. R150 provides a ligand contact to a 1,2-diacyl-sn-glycero-3-phospho-(1'-sn-glycerol). 2 helical membrane-spanning segments follow: residues 206 to 226 and 246 to 266; these read GVIR…VAVI and ILTI…GIIW.

The protein belongs to the Lgt family.

Its subcellular location is the cell inner membrane. It catalyses the reaction L-cysteinyl-[prolipoprotein] + a 1,2-diacyl-sn-glycero-3-phospho-(1'-sn-glycerol) = an S-1,2-diacyl-sn-glyceryl-L-cysteinyl-[prolipoprotein] + sn-glycerol 1-phosphate + H(+). It functions in the pathway protein modification; lipoprotein biosynthesis (diacylglyceryl transfer). Its function is as follows. Catalyzes the transfer of the diacylglyceryl group from phosphatidylglycerol to the sulfhydryl group of the N-terminal cysteine of a prolipoprotein, the first step in the formation of mature lipoproteins. This chain is Phosphatidylglycerol--prolipoprotein diacylglyceryl transferase, found in Chlamydia trachomatis serovar D (strain ATCC VR-885 / DSM 19411 / UW-3/Cx).